The primary structure comprises 167 residues: Protein-export protein SecB (167 aa).

Residues 1–20 (MASNDDAPVGAANGNGNTGA) form a disordered region.

This sequence belongs to the SecB family. In terms of assembly, homotetramer, a dimer of dimers. One homotetramer interacts with 1 SecA dimer.

It localises to the cytoplasm. Its function is as follows. One of the proteins required for the normal export of preproteins out of the cell cytoplasm. It is a molecular chaperone that binds to a subset of precursor proteins, maintaining them in a translocation-competent state. It also specifically binds to its receptor SecA. This Mesorhizobium japonicum (strain LMG 29417 / CECT 9101 / MAFF 303099) (Mesorhizobium loti (strain MAFF 303099)) protein is Protein-export protein SecB.